The following is a 587-amino-acid chain: 2-succinyl-5-enolpyruvyl-6-hydroxy-3-cyclohexene-1-carboxylate synthase (587 aa).

Belongs to the TPP enzyme family. MenD subfamily. As to quaternary structure, homodimer. The cofactor is Mg(2+). Mn(2+) is required as a cofactor. Thiamine diphosphate serves as cofactor.

It catalyses the reaction isochorismate + 2-oxoglutarate + H(+) = 5-enolpyruvoyl-6-hydroxy-2-succinyl-cyclohex-3-ene-1-carboxylate + CO2. It participates in quinol/quinone metabolism; 1,4-dihydroxy-2-naphthoate biosynthesis; 1,4-dihydroxy-2-naphthoate from chorismate: step 2/7. It functions in the pathway cofactor biosynthesis; phylloquinone biosynthesis. Catalyzes the thiamine diphosphate-dependent decarboxylation of 2-oxoglutarate and the subsequent addition of the resulting succinic semialdehyde-thiamine pyrophosphate anion to isochorismate to yield 2-succinyl-5-enolpyruvyl-6-hydroxy-3-cyclohexene-1-carboxylate (SEPHCHC). This is 2-succinyl-5-enolpyruvyl-6-hydroxy-3-cyclohexene-1-carboxylate synthase from Prochlorococcus marinus (strain AS9601).